Here is a 149-residue protein sequence, read N- to C-terminus: MADQLTDDQISEFKEAFSLFDKDGDGCITTKELGTVMRSLGQNPTEAELQDMINEVDADGNGTIDFPEFLNLMARKMKDTDSEEELKEAFRVFDKDQNGFISAAELRHVMTNLGEKLSDEEVDEMIREADVDGDGQINYEEFVKVMMAK.

4 EF-hand domains span residues 8-43 (DQIS…LGQN), 44-79 (PTEA…KMKD), 81-116 (DSEE…LGEK), and 117-149 (LSDE…MMAK). 19 residues coordinate Ca(2+): D21, D23, D25, C27, E32, D57, D59, N61, T63, E68, D94, D96, N98, E105, D130, D132, D134, Q136, and E141.

The protein belongs to the calmodulin family. As to quaternary structure, interacts with KCBP.

Calmodulin mediates the control of a large number of enzymes, ion channels and other proteins by Ca(2+). Among the enzymes to be stimulated by the calmodulin-Ca(2+) complex are a number of protein kinases and phosphatases. The polypeptide is Calmodulin-6 (CAM6) (Arabidopsis thaliana (Mouse-ear cress)).